The primary structure comprises 217 residues: Flagellin B2 (217 aa).

Positions 1 to 12 (MKVFEFLKGKRG) are excised as a propeptide.

Belongs to the archaeal flagellin family.

It localises to the archaeal flagellum. Functionally, flagellin is the subunit protein which polymerizes to form the filaments of archaeal flagella. This Methanocaldococcus jannaschii (strain ATCC 43067 / DSM 2661 / JAL-1 / JCM 10045 / NBRC 100440) (Methanococcus jannaschii) protein is Flagellin B2 (flaB2).